Consider the following 251-residue polypeptide: MDHAIYTAMGAASQTLNQQAVTASNLANASTPGFRAQLNALRAVPVEGLSLPTRTLVTASTPGADMTPGKMDYTSRPLDVALQQDGWLAVQTADGSEGYTRNGSIQVDPTGQLTIQGHPVIGEAGPIAVPEGAEITIAADGTISALNPGDPANTVAPVGRLKLVKATGSEVQRGDDGIFRLSAETQATRGPVLQADPTLRVMSGVLEGSNVNAVAAMSDMIASARRFEMQMKVISSVDDNAGRANQLLSMS.

Belongs to the flagella basal body rod proteins family. In terms of assembly, the basal body constitutes a major portion of the flagellar organelle and consists of five rings (E,L,P,S, and M) mounted on a central rod. The rod consists of about 26 subunits of FlgG in the distal portion, and FlgB, FlgC and FlgF are thought to build up the proximal portion of the rod with about 6 subunits each.

It localises to the bacterial flagellum basal body. This Escherichia coli (strain K12) protein is Flagellar basal-body rod protein FlgF (flgF).